A 163-amino-acid polypeptide reads, in one-letter code: Peptide deformylase 3 (163 aa).

2 residues coordinate Fe cation: Cys91 and His133. The active site involves Glu134. Residue His137 participates in Fe cation binding.

It belongs to the polypeptide deformylase family. It depends on Fe(2+) as a cofactor.

It catalyses the reaction N-terminal N-formyl-L-methionyl-[peptide] + H2O = N-terminal L-methionyl-[peptide] + formate. In terms of biological role, removes the formyl group from the N-terminal Met of newly synthesized proteins. Requires at least a dipeptide for an efficient rate of reaction. N-terminal L-methionine is a prerequisite for activity but the enzyme has broad specificity at other positions. The chain is Peptide deformylase 3 from Shewanella oneidensis (strain ATCC 700550 / JCM 31522 / CIP 106686 / LMG 19005 / NCIMB 14063 / MR-1).